Here is a 484-residue protein sequence, read N- to C-terminus: UDP-N-acetylmuramoyl-L-alanyl-D-glutamate--L-lysine ligase (484 aa).

A UDP-N-acetyl-alpha-D-muramoyl-L-alanyl-D-glutamate-binding site is contributed by Ser43. Residue 119 to 125 (GTKGKTT) participates in ATP binding. Residues 161–162 (TT), Ser188, and Arg196 each bind UDP-N-acetyl-alpha-D-muramoyl-L-alanyl-D-glutamate. Lys230 is subject to N6-carboxylysine. An L-lysine recognition motif motif is present at residues 405–408 (DDPN).

It belongs to the MurCDEF family. MurE subfamily. Post-translationally, carboxylation is probably crucial for Mg(2+) binding and, consequently, for the gamma-phosphate positioning of ATP.

Its subcellular location is the cytoplasm. The enzyme catalyses UDP-N-acetyl-alpha-D-muramoyl-L-alanyl-D-glutamate + L-lysine + ATP = UDP-N-acetyl-alpha-D-muramoyl-L-alanyl-gamma-D-glutamyl-L-lysine + ADP + phosphate + H(+). Its pathway is cell wall biogenesis; peptidoglycan biosynthesis. Functionally, catalyzes the addition of L-lysine to the nucleotide precursor UDP-N-acetylmuramoyl-L-alanyl-D-glutamate (UMAG) in the biosynthesis of bacterial cell-wall peptidoglycan. The chain is UDP-N-acetylmuramoyl-L-alanyl-D-glutamate--L-lysine ligase from Streptococcus agalactiae serotype V (strain ATCC BAA-611 / 2603 V/R).